Here is a 95-residue protein sequence, read N- to C-terminus: Aspartyl/glutamyl-tRNA(Asn/Gln) amidotransferase subunit C (95 aa).

Belongs to the GatC family. In terms of assembly, heterotrimer of A, B and C subunits.

The enzyme catalyses L-glutamyl-tRNA(Gln) + L-glutamine + ATP + H2O = L-glutaminyl-tRNA(Gln) + L-glutamate + ADP + phosphate + H(+). It catalyses the reaction L-aspartyl-tRNA(Asn) + L-glutamine + ATP + H2O = L-asparaginyl-tRNA(Asn) + L-glutamate + ADP + phosphate + 2 H(+). Functionally, allows the formation of correctly charged Asn-tRNA(Asn) or Gln-tRNA(Gln) through the transamidation of misacylated Asp-tRNA(Asn) or Glu-tRNA(Gln) in organisms which lack either or both of asparaginyl-tRNA or glutaminyl-tRNA synthetases. The reaction takes place in the presence of glutamine and ATP through an activated phospho-Asp-tRNA(Asn) or phospho-Glu-tRNA(Gln). The sequence is that of Aspartyl/glutamyl-tRNA(Asn/Gln) amidotransferase subunit C from Nitrobacter winogradskyi (strain ATCC 25391 / DSM 10237 / CIP 104748 / NCIMB 11846 / Nb-255).